Consider the following 141-residue polypeptide: HTH-type transcriptional repressor NsrR (141 aa).

The region spanning 2–129 is the HTH rrf2-type domain; the sequence is QLTSFTDYGL…DNYTLADLVE (128 aa). The segment at residues 28–51 is a DNA-binding region (H-T-H motif); it reads ISEVTEVYGVSRNHMVKIINQLSR. 3 residues coordinate [2Fe-2S] cluster: C91, C96, and C102.

[2Fe-2S] cluster serves as cofactor.

Its function is as follows. Nitric oxide-sensitive repressor of genes involved in protecting the cell against nitrosative stress. May require iron for activity. This chain is HTH-type transcriptional repressor NsrR, found in Klebsiella pneumoniae subsp. pneumoniae (strain ATCC 700721 / MGH 78578).